The chain runs to 537 residues: Berberine bridge enzyme-like 26 (537 aa).

The first 27 residues, 1–27, serve as a signal peptide directing secretion; it reads MGISKPLPLFSILVLYFSLYTITPTSS. An intrachain disulfide couples Cys38 to Cys102. Asn59 carries N-linked (GlcNAc...) asparagine glycosylation. An FAD-binding PCMH-type domain is found at 80–256; it reads SMPKPGFIFS…LAWKIKLVPV (177 aa). A cross-link (6-(S-cysteinyl)-8alpha-(pros-histidyl)-FAD (His-Cys)) is located at residues 117-181; sequence HDYEGLSYVS…KVHGFPAGLC (65 aa). N-linked (GlcNAc...) asparagine glycosylation occurs at Asn306.

This sequence belongs to the oxygen-dependent FAD-linked oxidoreductase family. It depends on FAD as a cofactor. Post-translationally, the FAD cofactor is bound via a bicovalent 6-S-cysteinyl, 8alpha-N1-histidyl FAD linkage.

The protein resides in the secreted. Its subcellular location is the cell wall. This chain is Berberine bridge enzyme-like 26, found in Arabidopsis thaliana (Mouse-ear cress).